A 360-amino-acid polypeptide reads, in one-letter code: Deoxyhypusine hydroxylase (360 aa).

HEAT-like PBS-type repeat units lie at residues 56–82, 89–115, and 213–245; these read LKHE…ILQD, VRHE…YRSD, and ERYR…GLQD. Histidine 58, glutamate 59, histidine 91, and glutamate 92 together coordinate Fe cation. 4 residues coordinate Fe cation: histidine 252, glutamate 253, histidine 285, and glutamate 286.

The protein belongs to the deoxyhypusine hydroxylase family. Fe(2+) is required as a cofactor.

The protein localises to the cytoplasm. It is found in the nucleus. The enzyme catalyses [eIF5A protein]-deoxyhypusine + AH2 + O2 = [eIF5A protein]-hypusine + A + H2O. The protein operates within protein modification; eIF5A hypusination. Its function is as follows. Catalyzes the hydroxylation of the N(6)-(4-aminobutyl)-L-lysine intermediate to form hypusine, an essential post-translational modification only found in mature eIF-5A factor. The protein is Deoxyhypusine hydroxylase of Mycosarcoma maydis (Corn smut fungus).